Here is a 720-residue protein sequence, read N- to C-terminus: DNA replication licensing factor mcm7-A (720 aa).

Residues 183–210 form a C4-type zinc finger; the sequence is CDQCGAETYQPIQSPTFMPLIMCPSREC. Residues 331-537 enclose the MCM domain; that stretch reads FYEKLAASIA…NDLRLAQHIT (207 aa). 8 residues coordinate ATP: tyrosine 344, glycine 383, alanine 385, lysine 386, serine 387, asparagine 488, arginine 513, and arginine 603. The short motif at 512–515 is the Arginine finger element; that stretch reads SRFD.

Belongs to the MCM family. In terms of assembly, component of the mcm2-7 complex (RLF-M). The complex forms a toroidal hexameric ring with the proposed subunit order mcm2-mcm6-mcm4-mcm7-mcm3-mcm5. The heterodimer of mmcm3/mcm5 interacts with mcm4, mmcm6, mcm7 and weakly with mcm2. The N-terminus is required for interaction with mmcm3, though this interaction may not be direct, and remains in a complex with mmcm3 throughout the cell cycle. Begins to associate with zmcm6 at the neurula stage. Component of the replisome complex. Component of the CMG helicase complex, composed of the mcm2-7 complex, the GINS complex and cdc45. In terms of processing, ubiquitinated by traip when forks converge following formation of DNA interstrand cross-links. Ubiquitinated via 'Lys-6'- and 'Lys-63'-linked polyubiquitination by traip. Short ubiquitin chains on mcm7 promote recruitment of DNA glycosylase neil3. If the interstrand cross-link cannot be cleaved by neil3, the ubiquitin chains continue to grow on mcm7, promoting the unloading of the CMG helicase complex by the vcp/p97 ATPase.

It is found in the nucleus. The protein localises to the chromosome. It catalyses the reaction ATP + H2O = ADP + phosphate + H(+). Functionally, acts as a component of the mcm2-7 complex (mcm complex) which is the putative replicative helicase essential for 'once per cell cycle' DNA replication initiation and elongation in eukaryotic cells. The active ATPase sites in the mcm2-7 ring are formed through the interaction surfaces of two neighboring subunits such that a critical structure of a conserved arginine finger motif is provided in trans relative to the ATP-binding site of the Walker A box of the adjacent subunit. The six ATPase active sites, however, are likely to contribute differentially to the complex helicase activity. The existence of maternal and zygotic forms of mcm3 and mcm6 suggests that specific forms of mcm2-7 complexes may be used during different stages of development. This is DNA replication licensing factor mcm7-A (mcm7-a) from Xenopus laevis (African clawed frog).